A 593-amino-acid chain; its full sequence is Calnexin (593 aa).

A signal peptide spans 1–20; sequence MEGKWLLCMLLVLGTTIVQA. At 21-482 the chain is on the lumenal side; the sequence is HEGHDDDMID…QMIEAAEERP (462 aa). Ser-75 and Asp-118 together coordinate Ca(2+). Position 138 is an N6-acetyllysine (Lys-138). Cys-161 and Cys-195 are oxidised to a cystine. Tyr-165, Lys-167, Tyr-186, and Asp-193 together coordinate an alpha-D-glucoside. A disordered region spans residues 261-346; that stretch reads GNLLNDMTPP…AEKPEDWDED (86 aa). The segment at 277 to 410 is p domain (Extended arm); that stretch reads IEDPEDQKPE…RKIPNPDFFE (134 aa). A run of 5 repeats spans residues 279–290, 296–307, 315–326, 334–345, and 349–359. 4 X approximate repeats regions lie at residues 279 to 345 and 349 to 406; these read DPED…DWDE and GEWE…IPNP. The span at 282-320 shows a compositional bias: basic and acidic residues; that stretch reads DQKPEDWDERPKIPDPDAVKPDDWNEDAPAKIPDEEATK. Positions 324–346 are enriched in acidic residues; it reads WLDDEPEYVPDPDAEKPEDWDED. The interaction with PPIB stretch occupies residues 327–360; sequence DEPEYVPDPDAEKPEDWDEDMDGEWEAPQIANPK. Cysteines 361 and 367 form a disulfide. 3 consecutive repeat copies span residues 368-378, 382-392, and 396-406. Glu-426 lines the an alpha-D-glucoside pocket. Asp-437 provides a ligand contact to Ca(2+). Residues 483-503 traverse the membrane as a helical segment; that stretch reads WLWVVYVLTVALPVFLVILFC. 2 S-palmitoyl cysteine lipidation sites follow: Cys-503 and Cys-504. Over 504-593 the chain is Cytoplasmic; the sequence is CSGKKQSSPV…SPRNRKPRRE (90 aa). Residues 504-593 form a sufficient to mediate interaction with SGIP1 region; it reads CSGKKQSSPV…SPRNRKPRRE (90 aa). The disordered stretch occupies residues 511–593; the sequence is SPVEYKKTDA…SPRNRKPRRE (83 aa). Over residues 526 to 548 the composition is skewed to acidic residues; the sequence is KEEEEEKEEEKDKGDEEEEGEEK. Ser-555 is subject to Phosphoserine. At Thr-563 the chain carries Phosphothreonine. Ser-565 bears the Phosphoserine; by MAPK3 mark. Ser-584 carries the phosphoserine modification.

The protein belongs to the calreticulin family. As to quaternary structure, interacts with MAPK3/ERK1. Interacts with KCNH2. Associates with ribosomes. Interacts with SGIP1; involved in negative regulation of endocytosis. The palmitoylated form interacts with the ribosome-translocon complex component SSR1, promoting efficient folding of glycoproteins. Interacts with SERPINA2P/SERPINA2 and with the S and Z variants of SERPINA1. Interacts with PPIB. Interacts with ZNRF4. Interacts with SMIM22. Interacts with TMX2. Interacts with TMEM35A/NACHO and CHRNA7. Interacts with reticulophagy regulators RETREG2 and RETREG3. Interacts with DNM1L; may form part of a larger protein complex at the ER-mitochondrial interface during mitochondrial fission. Interacts with ADAM7. Phosphorylated at Ser-565 by MAPK3/ERK1. Phosphorylation by MAPK3/ERK1 increases its association with ribosomes. Post-translationally, palmitoylation by DHHC6 leads to the preferential localization to the perinuclear rough ER. It mediates the association of calnexin with the ribosome-translocon complex (RTC) which is required for efficient folding of glycosylated proteins. In terms of processing, ubiquitinated, leading to proteasomal degradation. Probably ubiquitinated by ZNRF4.

It is found in the endoplasmic reticulum membrane. The protein resides in the mitochondrion membrane. The protein localises to the melanosome membrane. Its function is as follows. Calcium-binding protein that interacts with newly synthesized monoglucosylated glycoproteins in the endoplasmic reticulum. It may act in assisting protein assembly and/or in the retention within the ER of unassembled protein subunits. It seems to play a major role in the quality control apparatus of the ER by the retention of incorrectly folded proteins. Associated with partial T-cell antigen receptor complexes that escape the ER of immature thymocytes, it may function as a signaling complex regulating thymocyte maturation. Additionally it may play a role in receptor-mediated endocytosis at the synapse. The chain is Calnexin (CANX) from Canis lupus familiaris (Dog).